A 424-amino-acid chain; its full sequence is Serine--tRNA ligase (424 aa).

An L-serine-binding site is contributed by 228 to 230 (TAE). Residue 259 to 261 (RSE) coordinates ATP. An L-serine-binding site is contributed by Glu282. 346–349 (EISS) lines the ATP pocket. Residue Ser382 participates in L-serine binding.

This sequence belongs to the class-II aminoacyl-tRNA synthetase family. Type-1 seryl-tRNA synthetase subfamily. In terms of assembly, homodimer. The tRNA molecule binds across the dimer.

The protein localises to the cytoplasm. The catalysed reaction is tRNA(Ser) + L-serine + ATP = L-seryl-tRNA(Ser) + AMP + diphosphate + H(+). The enzyme catalyses tRNA(Sec) + L-serine + ATP = L-seryl-tRNA(Sec) + AMP + diphosphate + H(+). Its pathway is aminoacyl-tRNA biosynthesis; selenocysteinyl-tRNA(Sec) biosynthesis; L-seryl-tRNA(Sec) from L-serine and tRNA(Sec): step 1/1. Functionally, catalyzes the attachment of serine to tRNA(Ser). Is also able to aminoacylate tRNA(Sec) with serine, to form the misacylated tRNA L-seryl-tRNA(Sec), which will be further converted into selenocysteinyl-tRNA(Sec). This chain is Serine--tRNA ligase, found in Rhodospirillum centenum (strain ATCC 51521 / SW).